A 391-amino-acid polypeptide reads, in one-letter code: DNA polymerase IV (391 aa).

In terms of domain architecture, UmuC spans 6 to 187 (IIHVDMDAFF…LPVEMLWGVG (182 aa)). Positions 10 and 105 each coordinate Mg(2+). Glutamate 106 is a catalytic residue.

The protein belongs to the DNA polymerase type-Y family. Monomer. Mg(2+) is required as a cofactor.

Its subcellular location is the cytoplasm. The catalysed reaction is DNA(n) + a 2'-deoxyribonucleoside 5'-triphosphate = DNA(n+1) + diphosphate. Poorly processive, error-prone DNA polymerase involved in untargeted mutagenesis. Copies undamaged DNA at stalled replication forks, which arise in vivo from mismatched or misaligned primer ends. These misaligned primers can be extended by PolIV. Exhibits no 3'-5' exonuclease (proofreading) activity. May be involved in translesional synthesis, in conjunction with the beta clamp from PolIII. The polypeptide is DNA polymerase IV (Carboxydothermus hydrogenoformans (strain ATCC BAA-161 / DSM 6008 / Z-2901)).